The primary structure comprises 360 residues: N6-Methyl-AMP deaminase (360 aa).

2 residues coordinate Zn(2+): His-23 and His-25. N(6)-methyl-AMP-binding positions include His-25, Asn-27, His-73, 105-108 (STPR), Asp-147, and Gly-180. His-207 lines the Zn(2+) pocket. Glu-210, Asp-292, and Asp-293 together coordinate N(6)-methyl-AMP. Residue Glu-210 is the Proton donor of the active site. Asp-292 contacts Zn(2+).

Belongs to the metallo-dependent hydrolases superfamily. Adenosine and AMP deaminases family. Monomer. The cofactor is Zn(2+).

The catalysed reaction is N(6)-methyl-AMP + H2O + H(+) = IMP + methylamine. Functionally, catalyzes the hydrolysis of the free cytosolic methylated adenosine nucleotide N(6)-methyl-AMP (N6-mAMP) to produce inositol monophosphate (IMP) and methylamine. Is required for the catabolism of cytosolic N6-mAMP, which is derived from the degradation of mRNA containing N6-methylated adenine (m6A). This is N6-Methyl-AMP deaminase (Mapda) from Mus musculus (Mouse).